A 399-amino-acid polypeptide reads, in one-letter code: Probable sugar efflux transporter (399 aa).

Transmembrane regions (helical) follow at residues 15–35 (VVTL…PVGL), 50–70 (VGMM…PFML), 81–101 (LIGL…AWNF), 103–123 (VLVI…SITS), 136–156 (AQAL…GIPI), 168–188 (MTFL…VKLL), 209–229 (PALV…YTAY), 246–266 (FATV…ILFG), 273–293 (ASGL…LLLP), 301–321 (LMLL…GMQV), 333–353 (VAMS…ALVG), and 364–384 (SVGY…LMIF).

It belongs to the major facilitator superfamily. SotB (TC 2.A.1.2) family.

Its subcellular location is the cell inner membrane. In terms of biological role, involved in the efflux of sugars. The physiological role may be the reduction of the intracellular concentration of toxic sugars or sugar metabolites. The sequence is that of Probable sugar efflux transporter from Klebsiella pneumoniae subsp. pneumoniae (strain ATCC 700721 / MGH 78578).